Consider the following 183-residue polypeptide: Translation initiation factor IF-3 (183 aa).

This sequence belongs to the IF-3 family. In terms of assembly, monomer.

The protein resides in the cytoplasm. Its function is as follows. IF-3 binds to the 30S ribosomal subunit and shifts the equilibrium between 70S ribosomes and their 50S and 30S subunits in favor of the free subunits, thus enhancing the availability of 30S subunits on which protein synthesis initiation begins. This chain is Translation initiation factor IF-3, found in Vibrio cholerae serotype O1 (strain ATCC 39315 / El Tor Inaba N16961).